A 167-amino-acid polypeptide reads, in one-letter code: C-X-C motif chemokine 15 (167 aa).

An N-terminal signal peptide occupies residues 1–25 (MAAQGWSMLLLAVLNLGIFVRPCDT). 2 disulfide bridges follow: Cys-30–Cys-57 and Cys-32–Cys-73. Position 157 is a phosphoserine (Ser-157).

It belongs to the intercrine alpha (chemokine CxC) family. As to expression, expression restricted to the lung, produced by bronchoepithelial cells and is released into the airways. Expressed at low levels in fetal lung.

It localises to the secreted. Functionally, chemotactic for neutrophils. Involved in lung-specific neutrophil trafficking during normal and inflammatory conditions. In Mus musculus (Mouse), this protein is C-X-C motif chemokine 15 (Cxcl15).